A 290-amino-acid polypeptide reads, in one-letter code: Probable ECF RNA polymerase sigma factor SigI (290 aa).

The tract at residues 11–74 (WRAHRAYLVD…LCLDHIKSAS (64 aa)) is sigma-70 factor domain-2. A Polymerase core binding motif is present at residues 34–37 (DMVQ). The interval 110–162 (LALLIMLERLGPAERVVFVLHEIFGLPYQQIATTIGSQASTCRQLAHRARRKI) is sigma-70 factor domain-4_2. The segment at residues 137 to 156 (YQQIATTIGSQASTCRQLAH) is a DNA-binding region (H-T-H motif).

This sequence belongs to the sigma-70 factor family. ECF subfamily. In terms of assembly, interacts transiently with the RNA polymerase catalytic core formed by RpoA, RpoB, RpoC and RpoZ (2 alpha, 1 beta, 1 beta' and 1 omega subunit) to form the RNA polymerase holoenzyme that can initiate transcription.

Functionally, sigma factors are initiation factors that promote the attachment of RNA polymerase to specific initiation sites and are then released. Extracytoplasmic function (ECF) sigma factors are held in an inactive form by a cognate anti-sigma factor until released, although no anti-sigma factor is known for this protein. This Mycobacterium tuberculosis (strain CDC 1551 / Oshkosh) protein is Probable ECF RNA polymerase sigma factor SigI (sigI).